We begin with the raw amino-acid sequence, 371 residues long: tRNA-specific 2-thiouridylase MnmA (371 aa).

Residues 14-21 (GMSGGVDS) and M40 contribute to the ATP site. Residues 100–102 (NPD) are interaction with target base in tRNA. Catalysis depends on C105, which acts as the Nucleophile. The cysteines at positions 105 and 205 are disulfide-linked. G129 provides a ligand contact to ATP. The interaction with tRNA stretch occupies residues 155 to 157 (KDQ). The active-site Cysteine persulfide intermediate is the C205. The interval 321-322 (RY) is interaction with tRNA.

This sequence belongs to the MnmA/TRMU family.

Its subcellular location is the cytoplasm. The enzyme catalyses S-sulfanyl-L-cysteinyl-[protein] + uridine(34) in tRNA + AH2 + ATP = 2-thiouridine(34) in tRNA + L-cysteinyl-[protein] + A + AMP + diphosphate + H(+). In terms of biological role, catalyzes the 2-thiolation of uridine at the wobble position (U34) of tRNA, leading to the formation of s(2)U34. The sequence is that of tRNA-specific 2-thiouridylase MnmA from Bordetella pertussis (strain Tohama I / ATCC BAA-589 / NCTC 13251).